The following is a 364-amino-acid chain: UDP-N-acetylglucosamine--N-acetylmuramyl-(pentapeptide) pyrophosphoryl-undecaprenol N-acetylglucosamine transferase (364 aa).

Residues Thr10–Gly12, Asn124, Arg161, Ser195, and Gln291 contribute to the UDP-N-acetyl-alpha-D-glucosamine site.

The protein belongs to the glycosyltransferase 28 family. MurG subfamily.

Its subcellular location is the cell membrane. It carries out the reaction di-trans,octa-cis-undecaprenyl diphospho-N-acetyl-alpha-D-muramoyl-L-alanyl-D-glutamyl-meso-2,6-diaminopimeloyl-D-alanyl-D-alanine + UDP-N-acetyl-alpha-D-glucosamine = di-trans,octa-cis-undecaprenyl diphospho-[N-acetyl-alpha-D-glucosaminyl-(1-&gt;4)]-N-acetyl-alpha-D-muramoyl-L-alanyl-D-glutamyl-meso-2,6-diaminopimeloyl-D-alanyl-D-alanine + UDP + H(+). It participates in cell wall biogenesis; peptidoglycan biosynthesis. In terms of biological role, cell wall formation. Catalyzes the transfer of a GlcNAc subunit on undecaprenyl-pyrophosphoryl-MurNAc-pentapeptide (lipid intermediate I) to form undecaprenyl-pyrophosphoryl-MurNAc-(pentapeptide)GlcNAc (lipid intermediate II). The polypeptide is UDP-N-acetylglucosamine--N-acetylmuramyl-(pentapeptide) pyrophosphoryl-undecaprenol N-acetylglucosamine transferase (Streptomyces coelicolor (strain ATCC BAA-471 / A3(2) / M145)).